A 620-amino-acid chain; its full sequence is Probable potassium transport system protein Kup (620 aa).

12 helical membrane passes run 8 to 28 (VGLLVSAVGVVFGDIGTSPLY), 50 to 70 (VLSLVFWTVMLLVTVKYVILI), 102 to 122 (MLLGVIAAALFYGDSMITPAI), 136 to 156 (PDLKAYVVPITALVLTGLFAI), 168 to 188 (FGPVMCLWFVTLALLGIANIV), 211 to 231 (LMSFYALGTVVLAVTGGEALY), 246 to 266 (WFSLVLPALLLNYFGQGALLI), 284 to 304 (MVMPMVALATLATVIASQAVI), 336 to 356 (IYVPFTNWTLYFAVMALVIGF), 368 to 388 (IAVTGTMMIDTILVSFVMALL), 393 to 413 (MALVIVVAGTLLLVDFAYFAA), and 415 to 435 (IIKVAQGGWFPLFIGFISFTV).

This sequence belongs to the HAK/KUP transporter (TC 2.A.72) family.

The protein resides in the cell inner membrane. The enzyme catalyses K(+)(in) + H(+)(in) = K(+)(out) + H(+)(out). In terms of biological role, transport of potassium into the cell. Likely operates as a K(+):H(+) symporter. The protein is Probable potassium transport system protein Kup of Rhodopseudomonas palustris (strain HaA2).